Consider the following 1925-residue polypeptide: Diacylglycerol kinase eta (1925 aa).

A PH domain is found at 82-175 (AIIREGYLMK…WLGSLKTATA (94 aa)). Phorbol-ester/DAG-type zinc fingers lie at residues 195 to 245 (HHHW…IANC) and 268 to 319 (PHQW…PIVC). Positions 350–486 (GNFSPLLVFV…DRWSIMVFEK (137 aa)) constitute a DAGKc domain. Disordered stretches follow at residues 620–641 (EKDNINSKERRNSRSLRSSEKE), 783–805 (ANIDDAGNRLSPSSEAGENTPTE), 847–872 (DKERTASGQVESEKEEADVNEKSEPQ), 1013–1065 (TTLC…NPQQ), 1113–1141 (DRNSGDNHNDNGKNEEADTPTNSAPTRTY), 1167–1234 (NTTT…SSAS), 1256–1276 (IRRHSSHAPSLAVRDYDKDKD), and 1385–1405 (FSAGDKDEKPGKDKERTPTEE). Residues 792–802 (LSPSSEAGENT) show a composition bias toward polar residues. Positions 863-872 (ADVNEKSEPQ) are enriched in basic and acidic residues. Positions 1115–1128 (NSGDNHNDNGKNEE) are enriched in basic and acidic residues. Residues 1167 to 1187 (NTTTSTSSSISTTTTTSTTST) are compositionally biased toward low complexity. Positions 1386–1405 (SAGDKDEKPGKDKERTPTEE) are enriched in basic and acidic residues. In terms of domain architecture, SAM spans 1862–1925 (WSVNEVVTWL…LQAIKDLSEN (64 aa)).

This sequence belongs to the eukaryotic diacylglycerol kinase family.

It is found in the cytoplasm. The catalysed reaction is a 1,2-diacyl-sn-glycerol + ATP = a 1,2-diacyl-sn-glycero-3-phosphate + ADP + H(+). Functionally, phosphorylates diacylglycerol (DAG) to generate phosphatidic acid (PA). The protein is Diacylglycerol kinase eta of Drosophila mojavensis (Fruit fly).